Reading from the N-terminus, the 540-residue chain is 2,3-bisphosphoglycerate-independent phosphoglycerate mutase (540 aa).

Positions 25 and 75 each coordinate Mn(2+). Serine 75 serves as the catalytic Phosphoserine intermediate. Residues histidine 136, 166–167 (RD), arginine 198, arginine 204, 269–272 (RPDR), and lysine 342 contribute to the substrate site. Residues aspartate 409, histidine 413, aspartate 450, histidine 451, and histidine 468 each contribute to the Mn(2+) site.

It belongs to the BPG-independent phosphoglycerate mutase family. As to quaternary structure, monomer. It depends on Mn(2+) as a cofactor.

The enzyme catalyses (2R)-2-phosphoglycerate = (2R)-3-phosphoglycerate. Its pathway is carbohydrate degradation; glycolysis; pyruvate from D-glyceraldehyde 3-phosphate: step 3/5. In terms of biological role, catalyzes the interconversion of 2-phosphoglycerate and 3-phosphoglycerate. This chain is 2,3-bisphosphoglycerate-independent phosphoglycerate mutase, found in Prochlorococcus marinus subsp. pastoris (strain CCMP1986 / NIES-2087 / MED4).